Reading from the N-terminus, the 431-residue chain is Enolase (431 aa).

Residue Gln-167 participates in (2R)-2-phosphoglycerate binding. The Proton donor role is filled by Glu-209. Residues Asp-246, Glu-290, and Asp-317 each coordinate Mg(2+). Lys-342, Arg-371, Ser-372, and Lys-393 together coordinate (2R)-2-phosphoglycerate. Lys-342 functions as the Proton acceptor in the catalytic mechanism.

This sequence belongs to the enolase family. In terms of assembly, component of the RNA degradosome, a multiprotein complex involved in RNA processing and mRNA degradation. Requires Mg(2+) as cofactor.

The protein resides in the cytoplasm. The protein localises to the secreted. It is found in the cell surface. It carries out the reaction (2R)-2-phosphoglycerate = phosphoenolpyruvate + H2O. The protein operates within carbohydrate degradation; glycolysis; pyruvate from D-glyceraldehyde 3-phosphate: step 4/5. In terms of biological role, catalyzes the reversible conversion of 2-phosphoglycerate (2-PG) into phosphoenolpyruvate (PEP). It is essential for the degradation of carbohydrates via glycolysis. The polypeptide is Enolase (Erwinia tasmaniensis (strain DSM 17950 / CFBP 7177 / CIP 109463 / NCPPB 4357 / Et1/99)).